Here is a 94-residue protein sequence, read N- to C-terminus: MAKNLSAIKRIKTSERNRLINRKYKSVVKTLTKRCLMNIENLENSNLNDVQLSISQVYSKIDKAIKKGAFHPNTGARKKARLARIFAYAQKQQN.

This sequence belongs to the bacterial ribosomal protein bS20 family.

The protein resides in the plastid. The protein localises to the chloroplast. In terms of biological role, binds directly to 16S ribosomal RNA. The chain is Small ribosomal subunit protein bS20c from Porphyra purpurea (Red seaweed).